A 692-amino-acid chain; its full sequence is DNA repair protein RAD34 (692 aa).

A disordered region spans residues 1–38; sequence MAKRLLESSQNDQANRKNSKIEKKEVSFYEEEETDDSF. Acidic residues predominate over residues 28–38; that stretch reads FYEEEETDDSF.

The protein belongs to the XPC family.

It localises to the nucleus. Functionally, involved in nucleotide excision repair (NER) of damaged ribosomal DNA (rDNA). Required for the repair of the RNA polymerase I-transcribed strand of rDNA. This is DNA repair protein RAD34 (RAD34) from Saccharomyces cerevisiae (strain ATCC 204508 / S288c) (Baker's yeast).